Reading from the N-terminus, the 1258-residue chain is Ice nucleation protein (1258 aa).

An octapeptide periodicity region spans residues 162–1217 (ATYGSTLSGT…LTAGENSVLI (1056 aa)). 5 disordered regions span residues 260–287 (YGST…KGSD), 311–342 (TQTA…GYGS), 356–383 (YGST…KGSD), 407–438 (TQTA…GYGS), and 452–480 (YGST…GSDL). Polar residues-rich tracts occupy residues 261–286 (GSTQ…QKGS), 311–334 (TQTA…QKGS), 357–382 (GSTQ…QKGS), 407–430 (TQTA…QKGS), and 453–480 (GSTQ…GSDL).

This sequence belongs to the bacterial ice nucleation protein family.

Its subcellular location is the cell outer membrane. Ice nucleation proteins enable bacteria to nucleate crystallization in supercooled water. In Enterobacter agglomerans (Erwinia herbicola), this protein is Ice nucleation protein (iceE).